Here is a 133-residue protein sequence, read N- to C-terminus: Global transcriptional regulator Spx (133 aa).

C10 and C13 are oxidised to a cystine.

Belongs to the ArsC family. Spx subfamily. As to quaternary structure, interacts with the C-terminal domain of the alpha subunit of the RNAP.

It is found in the cytoplasm. In terms of biological role, global transcriptional regulator that plays a key role in stress response and exerts either positive or negative regulation of genes. Acts by interacting with the C-terminal domain of the alpha subunit of the RNA polymerase (RNAP). This interaction can enhance binding of RNAP to the promoter region of target genes and stimulate their transcription, or block interaction of RNAP with activator. The protein is Global transcriptional regulator Spx of Streptococcus pneumoniae serotype 4 (strain ATCC BAA-334 / TIGR4).